Consider the following 321-residue polypeptide: Probable arabinan endo-1,5-alpha-L-arabinosidase A (321 aa).

An N-terminal signal peptide occupies residues 1–19 (MSASAFVAVASCLAALVHG). Residue D34 is the Proton acceptor of the active site. The active-site Proton donor is E200.

The protein belongs to the glycosyl hydrolase 43 family.

The protein resides in the secreted. It catalyses the reaction Endohydrolysis of (1-&gt;5)-alpha-arabinofuranosidic linkages in (1-&gt;5)-arabinans.. It functions in the pathway glycan metabolism; L-arabinan degradation. Its function is as follows. Endo-1,5-alpha-L-arabinanase involved in degradation of pectin. Its preferred substrate is linear 1,5-alpha-L-arabinan. The chain is Probable arabinan endo-1,5-alpha-L-arabinosidase A (abnA) from Neosartorya fischeri (strain ATCC 1020 / DSM 3700 / CBS 544.65 / FGSC A1164 / JCM 1740 / NRRL 181 / WB 181) (Aspergillus fischerianus).